The primary structure comprises 328 residues: Porphobilinogen deaminase (328 aa).

S-(dipyrrolylmethanemethyl)cysteine is present on Cys250.

This sequence belongs to the HMBS family. In terms of assembly, monomer. Dipyrromethane is required as a cofactor.

The enzyme catalyses 4 porphobilinogen + H2O = hydroxymethylbilane + 4 NH4(+). Its pathway is porphyrin-containing compound metabolism; protoporphyrin-IX biosynthesis; coproporphyrinogen-III from 5-aminolevulinate: step 2/4. Functionally, tetrapolymerization of the monopyrrole PBG into the hydroxymethylbilane pre-uroporphyrinogen in several discrete steps. This chain is Porphobilinogen deaminase, found in Burkholderia ambifaria (strain ATCC BAA-244 / DSM 16087 / CCUG 44356 / LMG 19182 / AMMD) (Burkholderia cepacia (strain AMMD)).